Consider the following 148-residue polypeptide: Large ribosomal subunit protein uL15 (148 aa).

Residues 1–11 show a composition bias toward basic and acidic residues; it reads MSEPIKLHDLR. The interval 1-52 is disordered; it reads MSEPIKLHDLRPAAGSNKAKTRVGRGEASKGKTAGRGTKGTKARKQVSAAFE.

This sequence belongs to the universal ribosomal protein uL15 family. In terms of assembly, part of the 50S ribosomal subunit.

Binds to the 23S rRNA. The chain is Large ribosomal subunit protein uL15 from Corynebacterium glutamicum (strain R).